A 232-amino-acid chain; its full sequence is tRNA (guanine-N(1)-)-methyltransferase (232 aa).

S-adenosyl-L-methionine contacts are provided by residues Gly111 and Ile131 to Leu136.

It belongs to the RNA methyltransferase TrmD family. As to quaternary structure, homodimer.

The protein localises to the cytoplasm. It carries out the reaction guanosine(37) in tRNA + S-adenosyl-L-methionine = N(1)-methylguanosine(37) in tRNA + S-adenosyl-L-homocysteine + H(+). In terms of biological role, specifically methylates guanosine-37 in various tRNAs. This chain is tRNA (guanine-N(1)-)-methyltransferase, found in Bartonella tribocorum (strain CIP 105476 / IBS 506).